Here is a 418-residue protein sequence, read N- to C-terminus: UDP-N-acetylglucosamine 1-carboxyvinyltransferase (418 aa).

22–23 (KN) is a phosphoenolpyruvate binding site. Arg-93 lines the UDP-N-acetyl-alpha-D-glucosamine pocket. Residue Cys-117 is the Proton donor of the active site. A 2-(S-cysteinyl)pyruvic acid O-phosphothioketal modification is found at Cys-117. UDP-N-acetyl-alpha-D-glucosamine-binding positions include 122 to 126 (RPIDL), Asp-306, and Leu-328.

Belongs to the EPSP synthase family. MurA subfamily.

It localises to the cytoplasm. It catalyses the reaction phosphoenolpyruvate + UDP-N-acetyl-alpha-D-glucosamine = UDP-N-acetyl-3-O-(1-carboxyvinyl)-alpha-D-glucosamine + phosphate. Its pathway is cell wall biogenesis; peptidoglycan biosynthesis. Functionally, cell wall formation. Adds enolpyruvyl to UDP-N-acetylglucosamine. This is UDP-N-acetylglucosamine 1-carboxyvinyltransferase from Campylobacter hominis (strain ATCC BAA-381 / DSM 21671 / CCUG 45161 / LMG 19568 / NCTC 13146 / CH001A).